The following is a 169-amino-acid chain: Peptide methionine sulfoxide reductase MsrA (169 aa).

Cys11 is a catalytic residue.

The protein belongs to the MsrA Met sulfoxide reductase family.

The catalysed reaction is L-methionyl-[protein] + [thioredoxin]-disulfide + H2O = L-methionyl-(S)-S-oxide-[protein] + [thioredoxin]-dithiol. The enzyme catalyses [thioredoxin]-disulfide + L-methionine + H2O = L-methionine (S)-S-oxide + [thioredoxin]-dithiol. Functionally, has an important function as a repair enzyme for proteins that have been inactivated by oxidation. Catalyzes the reversible oxidation-reduction of methionine sulfoxide in proteins to methionine. In Leifsonia xyli subsp. xyli (strain CTCB07), this protein is Peptide methionine sulfoxide reductase MsrA.